The primary structure comprises 435 residues: Methylenetetrahydrofolate--tRNA-(uracil-5-)-methyltransferase TrmFO (435 aa).

Residue 9–14 participates in FAD binding; it reads GAGLAG.

The protein belongs to the MnmG family. TrmFO subfamily. It depends on FAD as a cofactor.

It is found in the cytoplasm. The enzyme catalyses uridine(54) in tRNA + (6R)-5,10-methylene-5,6,7,8-tetrahydrofolate + NADH + H(+) = 5-methyluridine(54) in tRNA + (6S)-5,6,7,8-tetrahydrofolate + NAD(+). It catalyses the reaction uridine(54) in tRNA + (6R)-5,10-methylene-5,6,7,8-tetrahydrofolate + NADPH + H(+) = 5-methyluridine(54) in tRNA + (6S)-5,6,7,8-tetrahydrofolate + NADP(+). In terms of biological role, catalyzes the folate-dependent formation of 5-methyl-uridine at position 54 (M-5-U54) in all tRNAs. This is Methylenetetrahydrofolate--tRNA-(uracil-5-)-methyltransferase TrmFO from Staphylococcus haemolyticus (strain JCSC1435).